Reading from the N-terminus, the 267-residue chain is U6 snRNA phosphodiesterase 1 (267 aa).

Residues 1 to 13 (MSSAPLVGYSSSG) show a composition bias toward polar residues. Residues 1-74 (MSSAPLVGYS…DSAKHGGRIR (74 aa)) are disordered. Residue His-122 is the Proton acceptor of the active site. 122–124 (HVS) contacts AMP. UMP contacts are provided by residues Gln-166, Tyr-204, and 208-212 (SFHIS). AMP contacts are provided by residues Tyr-204 and 206–212 (DPSFHIS). His-210 serves as the catalytic Proton donor.

The protein belongs to the 2H phosphoesterase superfamily. USB1 family. Interacts with PLRG1, CDC5L and PRPF19.

It is found in the nucleus. It carries out the reaction a 3'-end uridylyl-uridine-RNA = a 3'-end 2',3'-cyclophospho-uridine-RNA + uridine. The catalysed reaction is a 3'-end uridylyl-adenosine-RNA = a 3'-end 2',3'-cyclophospho-uridine-RNA + adenosine. Its function is as follows. 3'-5' RNA exonuclease that trims the 3' end of oligo(U) and oligo(A) tracts of the pre-U6 small nuclear RNA (snRNA) molecule, leading to the formation of a mature U6 snRNA 3' end-terminated with a 2',3'-cyclic phosphate. Participates in the U6 snRNA 3' end processing that prevents U6 snRNA degradation. In addition also removes uridines from the 3' end of U6atac snRNA and possibly the vault RNA VTRNA1-1. The protein is U6 snRNA phosphodiesterase 1 of Mus musculus (Mouse).